A 370-amino-acid polypeptide reads, in one-letter code: 3-dehydroquinate synthase (370 aa).

NAD(+) contacts are provided by residues glycine 107 to aspartate 111, threonine 131 to serine 132, lysine 144, and lysine 153. Zn(2+) contacts are provided by glutamate 186, histidine 249, and histidine 267.

It belongs to the sugar phosphate cyclases superfamily. Dehydroquinate synthase family. Co(2+) is required as a cofactor. The cofactor is Zn(2+). NAD(+) serves as cofactor.

The protein resides in the cytoplasm. It catalyses the reaction 7-phospho-2-dehydro-3-deoxy-D-arabino-heptonate = 3-dehydroquinate + phosphate. The protein operates within metabolic intermediate biosynthesis; chorismate biosynthesis; chorismate from D-erythrose 4-phosphate and phosphoenolpyruvate: step 2/7. In terms of biological role, catalyzes the conversion of 3-deoxy-D-arabino-heptulosonate 7-phosphate (DAHP) to dehydroquinate (DHQ). The polypeptide is 3-dehydroquinate synthase (Ruegeria pomeroyi (strain ATCC 700808 / DSM 15171 / DSS-3) (Silicibacter pomeroyi)).